The primary structure comprises 341 residues: Inner membrane ABC transporter permease protein YejE (341 aa).

The Cytoplasmic portion of the chain corresponds to methionine 1–glycine 21. A helical transmembrane segment spans residues tyrosine 22 to alanine 42. The Periplasmic segment spans residues asparagine 43 to serine 143. The ABC transmembrane type-1 domain occupies threonine 140 to arginine 332. Residues valine 144–leucine 164 form a helical membrane-spanning segment. Topologically, residues glutamine 165–arginine 178 are cytoplasmic. A helical membrane pass occupies residues phenylalanine 179 to valine 199. Residues glutamine 200–proline 201 lie on the Periplasmic side of the membrane. The helical transmembrane segment at asparagine 202–valine 222 threads the bilayer. The Cytoplasmic portion of the chain corresponds to arginine 223–histidine 252. A helical membrane pass occupies residues methionine 253–isoleucine 273. Topologically, residues threonine 274–proline 307 are periplasmic. Residues tryptophan 308–glycine 328 form a helical membrane-spanning segment. The Cytoplasmic segment spans residues glutamate 329–valine 341.

The protein belongs to the binding-protein-dependent transport system permease family. OppBC subfamily.

The protein resides in the cell inner membrane. Functionally, probably part of a binding-protein-dependent transport system. Probably responsible for the translocation of the substrate across the membrane. The sequence is that of Inner membrane ABC transporter permease protein YejE (yejE) from Escherichia coli (strain K12).